Reading from the N-terminus, the 193-residue chain is Large ribosomal subunit protein bL21 (193 aa).

The protein belongs to the bacterial ribosomal protein bL21 family. Part of the 50S ribosomal subunit. Contacts protein L20.

Its function is as follows. This protein binds to 23S rRNA in the presence of protein L20. This is Large ribosomal subunit protein bL21 from Ruegeria pomeroyi (strain ATCC 700808 / DSM 15171 / DSS-3) (Silicibacter pomeroyi).